A 597-amino-acid chain; its full sequence is NADPH-dependent diflavin oxidoreductase 1 (597 aa).

The Flavodoxin-like domain occupies 6-150 (LLVLFGSQTG…AIDPWLQDLW (145 aa)). FMN is bound by residues 12–17 (SQTGTA), 59–62 (ATTG), 97–106 (LGDSSYAKFN), and Asp-132. The FAD-binding FR-type domain maps to 206 to 446 (LQPFLAPMVS…WVRSGGLTFP (241 aa)). Residues Arg-350, 382-385 (RAFS), and 416-419 (GLCS) contribute to the FAD site. Residues Thr-460, 515-516 (SR), 521-525 (KVYVQ), and Asp-558 each bind NADP(+). Residue Trp-596 participates in FAD binding.

This sequence belongs to the NADPH-dependent diflavin oxidoreductase NDOR1 family. It in the N-terminal section; belongs to the flavodoxin family. The protein in the C-terminal section; belongs to the flavoprotein pyridine nucleotide cytochrome reductase family. As to quaternary structure, interacts with CIAPIN1; as part of the cytosolic iron-sulfur (Fe-S) protein assembly (CIA) machinery. Interacts with DCPS. It depends on FAD as a cofactor. The cofactor is FMN.

Its subcellular location is the cytoplasm. It localises to the perinuclear region. It catalyses the reaction 2 oxidized [2Fe-2S]-[protein] + NADPH = 2 reduced [2Fe-2S]-[protein] + NADP(+) + H(+). NADPH-dependent reductase which is a central component of the cytosolic iron-sulfur (Fe-S) protein assembly (CIA) machinery. Transfers electrons from NADPH via its FAD and FMN prosthetic groups to the [2Fe-2S] cluster of CIAPIN1, another key component of the CIA machinery. In turn, this reduced cluster provides electrons for assembly of cytosolic iron-sulfur cluster proteins. It can also reduce the [2Fe-2S] cluster of CISD1 and activate this protein implicated in Fe/S cluster repair. In vitro can fully activate methionine synthase/MTR in the presence of soluble cytochrome b5/CYB5A. This is NADPH-dependent diflavin oxidoreductase 1 from Bos taurus (Bovine).